A 115-amino-acid chain; its full sequence is U2-ctenitoxin-Pn1b (115 aa).

Residues 1–17 form the signal peptide; that stretch reads MKVAVIILSILVLAAAS. Residues 18–61 constitute a propeptide that is removed on maturation; that stretch reads ESIEEYREDFSRPNAMERSANDWIPTAPSAVERSADFAVEELER. 5 cysteine pairs are disulfide-bonded: Cys64-Cys78, Cys71-Cys84, Cys75-Cys113, Cys77-Cys98, and Cys86-Cys96. A propeptide is located at residue Lys115.

Belongs to the neurotoxin 03 (Tx2) family. 04 subfamily. As to expression, expressed by the venom gland.

It localises to the secreted. Its function is as follows. Blocks voltage-gated sodium channels (Nav). The sequence is that of U2-ctenitoxin-Pn1b from Phoneutria nigriventer (Brazilian armed spider).